We begin with the raw amino-acid sequence, 159 residues long: Small ribosomal subunit protein uS9 (159 aa).

Belongs to the universal ribosomal protein uS9 family.

This chain is Small ribosomal subunit protein uS9, found in Beijerinckia indica subsp. indica (strain ATCC 9039 / DSM 1715 / NCIMB 8712).